We begin with the raw amino-acid sequence, 359 residues long: Alanine racemase (359 aa).

Residue K34 is the Proton acceptor; specific for D-alanine of the active site. At K34 the chain carries N6-(pyridoxal phosphate)lysine. R129 contacts substrate. Y254 acts as the Proton acceptor; specific for L-alanine in catalysis. M302 serves as a coordination point for substrate.

It belongs to the alanine racemase family. Pyridoxal 5'-phosphate serves as cofactor.

The catalysed reaction is L-alanine = D-alanine. It participates in amino-acid biosynthesis; D-alanine biosynthesis; D-alanine from L-alanine: step 1/1. Its function is as follows. Catalyzes the interconversion of L-alanine and D-alanine. May also act on other amino acids. The chain is Alanine racemase (alr) from Yersinia pestis.